The chain runs to 169 residues: Crossover junction endodeoxyribonuclease RuvC (169 aa).

Active-site residues include Asp12, Glu72, and Asp144. 3 residues coordinate Mg(2+): Asp12, Glu72, and Asp144.

This sequence belongs to the RuvC family. In terms of assembly, homodimer which binds Holliday junction (HJ) DNA. The HJ becomes 2-fold symmetrical on binding to RuvC with unstacked arms; it has a different conformation from HJ DNA in complex with RuvA. In the full resolvosome a probable DNA-RuvA(4)-RuvB(12)-RuvC(2) complex forms which resolves the HJ. Requires Mg(2+) as cofactor.

Its subcellular location is the cytoplasm. It carries out the reaction Endonucleolytic cleavage at a junction such as a reciprocal single-stranded crossover between two homologous DNA duplexes (Holliday junction).. Its function is as follows. The RuvA-RuvB-RuvC complex processes Holliday junction (HJ) DNA during genetic recombination and DNA repair. Endonuclease that resolves HJ intermediates. Cleaves cruciform DNA by making single-stranded nicks across the HJ at symmetrical positions within the homologous arms, yielding a 5'-phosphate and a 3'-hydroxyl group; requires a central core of homology in the junction. The consensus cleavage sequence is 5'-(A/T)TT(C/G)-3'. Cleavage occurs on the 3'-side of the TT dinucleotide at the point of strand exchange. HJ branch migration catalyzed by RuvA-RuvB allows RuvC to scan DNA until it finds its consensus sequence, where it cleaves and resolves the cruciform DNA. The sequence is that of Crossover junction endodeoxyribonuclease RuvC from Xanthobacter autotrophicus (strain ATCC BAA-1158 / Py2).